A 118-amino-acid polypeptide reads, in one-letter code: UPF0058 protein MJ1132 (118 aa).

It belongs to the UPF0058 family.

This is UPF0058 protein MJ1132 from Methanocaldococcus jannaschii (strain ATCC 43067 / DSM 2661 / JAL-1 / JCM 10045 / NBRC 100440) (Methanococcus jannaschii).